A 317-amino-acid chain; its full sequence is Putative HTH-type transcriptional regulatory protein TGAM_1316 (317 aa).

In terms of domain architecture, HTH cro/C1-type spans 131-189 (LKKLREKHGYSVGELASLLGVSRKSLLNYERNEQAVSLEVALRMEELFDEPIAEPIDVL). The segment at residues 142–161 (VGELASLLGVSRKSLLNYER) is a DNA-binding region (H-T-H motif).

The chain is Putative HTH-type transcriptional regulatory protein TGAM_1316 from Thermococcus gammatolerans (strain DSM 15229 / JCM 11827 / EJ3).